The chain runs to 732 residues: DNA-directed RNA polymerase subunit beta' (732 aa).

Zn(2+)-binding residues include C70, C72, C85, and C88. The Mg(2+) site is built by D575, D577, and D579.

The protein belongs to the RNA polymerase beta' chain family. RpoC1 subfamily. In terms of assembly, in plastids the minimal PEP RNA polymerase catalytic core is composed of four subunits: alpha, beta, beta', and beta''. When a (nuclear-encoded) sigma factor is associated with the core the holoenzyme is formed, which can initiate transcription. The cofactor is Mg(2+). Zn(2+) serves as cofactor.

Its subcellular location is the plastid. The protein localises to the chloroplast. It carries out the reaction RNA(n) + a ribonucleoside 5'-triphosphate = RNA(n+1) + diphosphate. Its function is as follows. DNA-dependent RNA polymerase catalyzes the transcription of DNA into RNA using the four ribonucleoside triphosphates as substrates. The protein is DNA-directed RNA polymerase subunit beta' of Thalassiosira pseudonana (Marine diatom).